The sequence spans 1317 residues: Toxin protein Tse5 (1317 aa).

Residues 395–419 (GRETRRRRDGQGRMLEEESPGKARY) form a disordered region. Positions 403 to 415 (DGQGRMLEEESPG) are enriched in basic and acidic residues.

In terms of biological role, toxin secreted by the H1 type VI (H1-T6SS) secretion system that acts on bacterial target cells. The producing bacterium is protected by a cognate immunity protein. This is Toxin protein Tse5 from Pseudomonas aeruginosa (strain ATCC 15692 / DSM 22644 / CIP 104116 / JCM 14847 / LMG 12228 / 1C / PRS 101 / PAO1).